The sequence spans 429 residues: MADVVLGSQWGDEGKGKLVDILCDQIDVCARCQGGNNAGHTIVVGDVKYDFHMLPSGLVNPNCQNLLGSGVVIHVPSFFDELKAIEDKGLNCRDRLFVSSRCHLVFDFHQLTDGLKEQELSTTKKAIGTTGKGIGPTYSTKASRSGIRVHHLVSQEPGAWEEFESRLRRLVGTRQKRYGDFDYDVEEEIKRYKKLADDLRPFVIDAVPFMHKAIKANKRILIEGANALMLDLDFGTYPYVTSSNTGIGGVCTGLGIPPTAIRNIYGVVKAYTTRVGAGPFPTEQLNNVGEHLQEVGAEFGVTTGRRRRCGWLDLVVLQYSTWINGYTSLNITKLDVLDQLEELKVAVGYKHNGKVLESFPEDLHVLEQVECIYETLPGWKSDTTKITEYAELPENAKKYIAFIEKFLDCPVQWVGVGPGRSHMLSKSVN.

GTP-binding positions include 11–17 (GDEGKGK) and 39–41 (GHT). The active-site Proton acceptor is the aspartate 12. Positions 12 and 39 each coordinate Mg(2+). Residues 12–15 (DEGK), 37–40 (NAGH), threonine 130, arginine 144, asparagine 226, threonine 241, and arginine 305 contribute to the IMP site. The Proton donor role is filled by histidine 40. Position 301-307 (301-307 (VTTGRRR)) interacts with substrate. GTP-binding positions include arginine 307, 333–335 (KLD), and 415–417 (GVG).

The protein belongs to the adenylosuccinate synthetase family. In terms of assembly, homodimer. It depends on Mg(2+) as a cofactor.

It is found in the cytoplasm. It catalyses the reaction IMP + L-aspartate + GTP = N(6)-(1,2-dicarboxyethyl)-AMP + GDP + phosphate + 2 H(+). It functions in the pathway purine metabolism; AMP biosynthesis via de novo pathway; AMP from IMP: step 1/2. Functionally, plays an important role in the de novo pathway and in the salvage pathway of purine nucleotide biosynthesis. Catalyzes the first committed step in the biosynthesis of AMP from IMP. The sequence is that of Adenylosuccinate synthetase from Yarrowia lipolytica (strain CLIB 122 / E 150) (Yeast).